A 491-amino-acid polypeptide reads, in one-letter code: Probable cytosol aminopeptidase (491 aa).

Mn(2+) contacts are provided by Lys-261 and Asp-266. The active site involves Lys-273. Residues Asp-285, Asp-344, and Glu-346 each contribute to the Mn(2+) site. Residue Arg-348 is part of the active site.

The protein belongs to the peptidase M17 family. It depends on Mn(2+) as a cofactor.

Its subcellular location is the cytoplasm. It catalyses the reaction Release of an N-terminal amino acid, Xaa-|-Yaa-, in which Xaa is preferably Leu, but may be other amino acids including Pro although not Arg or Lys, and Yaa may be Pro. Amino acid amides and methyl esters are also readily hydrolyzed, but rates on arylamides are exceedingly low.. It carries out the reaction Release of an N-terminal amino acid, preferentially leucine, but not glutamic or aspartic acids.. Presumably involved in the processing and regular turnover of intracellular proteins. Catalyzes the removal of unsubstituted N-terminal amino acids from various peptides. In Picosynechococcus sp. (strain ATCC 27264 / PCC 7002 / PR-6) (Agmenellum quadruplicatum), this protein is Probable cytosol aminopeptidase.